Reading from the N-terminus, the 1244-residue chain is Actin cytoskeleton-regulatory complex protein SLA1 (1244 aa).

SH3 domains are found at residues 3 to 68 (VFLG…IEEA) and 69 to 132 (PVLK…PENG). Disordered regions lie at residues 128–248 (EPEN…GNHE) and 415–497 (DKKH…PKKS). Residues 140–159 (APAAAEAPAATPAAAPASAA) are compositionally biased toward low complexity. The segment covering 171-184 (HNDRARMMQSKEDQ) has biased composition (basic and acidic residues). The span at 199–214 (ARPTATTETTDATAAA) shows a compositional bias: low complexity. Acidic residues predominate over residues 226–235 (NDNDDEEDDY). Residues 353-415 (KSKKRGIVQY…PAQFIEPVRD (63 aa)) form the SH3 3 domain. The span at 429 to 447 (SIKKNFTKSPSRSRSRSRS) shows a compositional bias: basic residues. S447, S449, and S454 each carry phosphoserine. Residues K471 and K548 each participate in a glycyl lysine isopeptide (Lys-Gly) (interchain with G-Cter in ubiquitin) cross-link. The segment covering 471–484 (KRSRKSSLSSHKKN) has biased composition (basic residues). Disordered regions lie at residues 558 to 592 (KAND…RDRR), 610 to 649 (EERS…SNNN), and 726 to 791 (PTNA…NLLS). Basic and acidic residues-rich tracts occupy residues 568–592 (TDSR…RDRR) and 610–621 (EERSRLQEKELP). Over residues 629-649 (TSTTSVPNTTSVPPAESSNNN) the composition is skewed to low complexity. A compositionally biased stretch (polar residues) spans 726–756 (PTNATGNMFSQPDGSLNVATSPETSLPQQLL). The segment covering 757–771 (PQTTSPAQTAPSTSA) has biased composition (low complexity). Residue S799 is modified to Phosphoserine. The disordered stretch occupies residues 813–853 (KAAASTPEPNLKDLEPVKTGGTTVPAAPVSSAPVSSAPAPL). Position 831 is a phosphothreonine (T831). The segment covering 836–851 (VPAAPVSSAPVSSAPA) has biased composition (low complexity). T858 carries the phosphothreonine modification. Tandem repeats lie at residues 868–874 (TGFVMMP), 877–883 (TGGDMLP), and 887–893 (TGGFVVP). Positions 868-1205 (TGFVMMPMIT…NTFNTGGAMQ (338 aa)) are 16 X 7 AA approximate repeats of T-G-G-A-M-M-P. Phosphothreonine occurs at positions 887 and 904. 2 tandem repeats follow at residues 923-929 (TGGAMMP) and 945-951 (TGGGLIP). Residues T984 and T993 each carry the phosphothreonine modification. Residue S996 is modified to Phosphoserine. 5 tandem repeats follow at residues 1003–1009 (TGGTMIP), 1020–1026 (TGGAMMT), 1031–1037 (TGSAMMP), 1048–1054 (TGGAMMP), and 1065–1071 (TGGAMMP). T1075 bears the Phosphothreonine mark. Tandem repeats lie at residues 1084-1090 (TGGAMIP), 1129-1135 (TGGAMNT), 1155-1161 (TGGVMQE), 1170-1176 (TGGAMQQ), 1185-1191 (TDGIMQQ), and 1200-1206 (TGGAMQQ).

This sequence belongs to the SLA1 family. Component of the PAN1 actin cytoskeleton-regulatory complex. Interacts with ABP1, KRE6, LAS17, LSB5, RSP5, RVS167, VPS1 and YSC84. In terms of processing, phosphorylated by PRK1.

Its subcellular location is the nucleus. It is found in the cell membrane. The protein resides in the endosome membrane. It localises to the cytoplasm. The protein localises to the cytoskeleton. Its subcellular location is the actin patch. Its function is as follows. Component of the PAN1 actin cytoskeleton-regulatory complex required for the internalization of endosomes during actin-coupled endocytosis. The complex links the site of endocytosis to the cell membrane-associated actin cytoskeleton. Mediates uptake of external molecules and vacuolar degradation of plasma membrane proteins. Plays a role in the proper organization of the cell membrane-associated actin cytoskeleton and promotes its destabilization. This is Actin cytoskeleton-regulatory complex protein SLA1 (SLA1) from Saccharomyces cerevisiae (strain ATCC 204508 / S288c) (Baker's yeast).